Reading from the N-terminus, the 115-residue chain is Ribonuclease P protein component (115 aa).

This sequence belongs to the RnpA family. Consists of a catalytic RNA component (M1 or rnpB) and a protein subunit.

The catalysed reaction is Endonucleolytic cleavage of RNA, removing 5'-extranucleotides from tRNA precursor.. Its function is as follows. RNaseP catalyzes the removal of the 5'-leader sequence from pre-tRNA to produce the mature 5'-terminus. It can also cleave other RNA substrates such as 4.5S RNA. The protein component plays an auxiliary but essential role in vivo by binding to the 5'-leader sequence and broadening the substrate specificity of the ribozyme. The chain is Ribonuclease P protein component from Bacillus cereus (strain G9842).